A 612-amino-acid polypeptide reads, in one-letter code: MSAELIAVYKDEQIIDLESAKVLGLSDGIKALKGTEPIYFDDSPLALEVIRHSCAHLLAQSLKALYPDAKFFVGPVVEEGFYYDFKTASKISEEDLPKIEAKMKEFAKLKLAITKEVLTREQALERFKGDELKHAVMSKISGDAFGVYQQGEFEDLCKGPHLPNTRFLNHFKLTKLAGAYLGGDESNEMLIRIYGIAFATKEGLKDYLFQIEEAKKRDHRKLGVELGLFSFDDEIGAGLPLWLPKGARLRKRIEDLLSKALLLRGYEPVKGPEILKSDVWKISGHYDNYKENMYFTTIDEQEYGIKPMNCVGHIKVYQSALHSYRDLPLRFYEYGVVHRHEKSGVLHGLLRVREFTQDDAHIFCSFEQIQSEVSAILDFTHKIMQAFDFSYEMELSTRPAKSIGDDKVWEKATSALKEALKEHRIDYKIDEGGGAFYGPKIDIKITDALKRKWQCGTIQVDMNLPERFKLAFTNERNHAEQPVMIHRAILGSFERFIAILSEHFGGNFPFFVAPTQIALIPINEEHHVFALKLKEALKKRDIFVEVLDKNDSLNKKVRLAEKQKIPMILVLGNEEVETEILSIRDREKQAQYKMPLKEFLSMVESKMQEVSF.

Positions 218–509 are catalytic; sequence DHRKLGVELG…LSEHFGGNFP (292 aa). Positions 310, 361, and 486 each coordinate Zn(2+).

This sequence belongs to the class-II aminoacyl-tRNA synthetase family. In terms of assembly, homodimer. It depends on Zn(2+) as a cofactor.

The protein localises to the cytoplasm. It catalyses the reaction tRNA(Thr) + L-threonine + ATP = L-threonyl-tRNA(Thr) + AMP + diphosphate + H(+). In terms of biological role, catalyzes the attachment of threonine to tRNA(Thr) in a two-step reaction: L-threonine is first activated by ATP to form Thr-AMP and then transferred to the acceptor end of tRNA(Thr). Also edits incorrectly charged L-seryl-tRNA(Thr). The protein is Threonine--tRNA ligase of Helicobacter pylori (strain G27).